Here is a 292-residue protein sequence, read N- to C-terminus: Ribosomal RNA small subunit methyltransferase A (292 aa).

S-adenosyl-L-methionine is bound by residues Asn-29, Leu-31, Gly-56, Glu-77, Asp-102, and Asn-127.

The protein belongs to the class I-like SAM-binding methyltransferase superfamily. rRNA adenine N(6)-methyltransferase family. RsmA subfamily.

It localises to the cytoplasm. The enzyme catalyses adenosine(1518)/adenosine(1519) in 16S rRNA + 4 S-adenosyl-L-methionine = N(6)-dimethyladenosine(1518)/N(6)-dimethyladenosine(1519) in 16S rRNA + 4 S-adenosyl-L-homocysteine + 4 H(+). Functionally, specifically dimethylates two adjacent adenosines (A1518 and A1519) in the loop of a conserved hairpin near the 3'-end of 16S rRNA in the 30S particle. May play a critical role in biogenesis of 30S subunits. In Bacillus subtilis (strain 168), this protein is Ribosomal RNA small subunit methyltransferase A.